A 487-amino-acid chain; its full sequence is Acetyl-coenzyme A carboxylase carboxyl transferase subunit beta, chloroplastic (487 aa).

Residues 223-487 (LWIQCDNCYG…FCPLNKTEIK (265 aa)) form the CoA carboxyltransferase N-terminal domain. Zn(2+) is bound by residues Cys227, Cys230, Cys243, and Cys246. The C4-type zinc-finger motif lies at 227–246 (CDNCYGLMYKKVKMNVCEQC).

It belongs to the AccD/PCCB family. Acetyl-CoA carboxylase is a heterohexamer composed of biotin carboxyl carrier protein, biotin carboxylase and 2 subunits each of ACCase subunit alpha and ACCase plastid-coded subunit beta (accD). Requires Zn(2+) as cofactor.

The protein resides in the plastid. It localises to the chloroplast stroma. The enzyme catalyses N(6)-carboxybiotinyl-L-lysyl-[protein] + acetyl-CoA = N(6)-biotinyl-L-lysyl-[protein] + malonyl-CoA. It participates in lipid metabolism; malonyl-CoA biosynthesis; malonyl-CoA from acetyl-CoA: step 1/1. Functionally, component of the acetyl coenzyme A carboxylase (ACC) complex. Biotin carboxylase (BC) catalyzes the carboxylation of biotin on its carrier protein (BCCP) and then the CO(2) group is transferred by the transcarboxylase to acetyl-CoA to form malonyl-CoA. This is Acetyl-coenzyme A carboxylase carboxyl transferase subunit beta, chloroplastic from Nasturtium officinale (Watercress).